The primary structure comprises 549 residues: Cation/acetate symporter ActP (549 aa).

13 helical membrane passes run 33–53 (WQAIIMFLIFVVFTLGITYWA), 77–97 (LAIAGDYMSAASFLGISALVF), 103–123 (GLIYSLGFLVGWPIILFLIAE), 148–168 (ILSACGSLVVVALYLIAQMVG), 183–203 (IAVVLVGVLMMMYVLFGGMLA), 206–226 (WVQIIKAVLLLFGASFMAFMV), 262–282 (ISALSLGLGLMFGTAGLPHIL), 303–323 (GFMGYFYILTFIIGFGAIMLV), 355–375 (LFLGFISAVAFATILAVVAGL), 404–424 (VSKITVLILGVIAIILGVLFE), 428–448 (IAFMVGLAFAIAASCNFPIIL), 464–484 (GGWLGLITAVVLMILGPTIWV), and 493–513 (IFPYEYPALFSITVAFLGIWF).

This sequence belongs to the sodium:solute symporter (SSF) (TC 2.A.21) family.

The protein resides in the cell inner membrane. Its function is as follows. Transports acetate. In Escherichia fergusonii (strain ATCC 35469 / DSM 13698 / CCUG 18766 / IAM 14443 / JCM 21226 / LMG 7866 / NBRC 102419 / NCTC 12128 / CDC 0568-73), this protein is Cation/acetate symporter ActP.